A 139-amino-acid polypeptide reads, in one-letter code: Actin-depolymerizing factor 1 (139 aa).

The 135-residue stretch at 5–139 folds into the ADF-H domain; sequence ASGMAVCDEC…SMDIVKSRAL (135 aa).

Belongs to the actin-binding proteins ADF family.

Functionally, actin-depolymerizing protein. Severs actin filaments (F-actin) and binds to actin monomers. The protein is Actin-depolymerizing factor 1 (ADF1) of Oryza sativa subsp. japonica (Rice).